The chain runs to 236 residues: Mitochondrial-abundant heat soluble protein (236 aa).

A mitochondrion-targeting transit peptide spans 1-73 (MSRYLLRDVQ…AARAGVVLRG (73 aa)). Disordered regions lie at residues 102–135 (RIHS…NEAA) and 165–209 (RSNG…EIVA). Composition is skewed to polar residues over residues 105 to 126 (SQSS…NSPQ) and 192 to 202 (APDSSKNTKSV). The short motif at 126 to 143 (QPEGKANEAAERAKQFMN) is the MAHS motif element.

Its subcellular location is the mitochondrion. Functionally, mitochondrial heat soluble protein acting as a molecular shield in water-deficient condition. The sequence is that of Mitochondrial-abundant heat soluble protein from Ramazzottius varieornatus (Water bear).